We begin with the raw amino-acid sequence, 296 residues long: Beta-lactamase (296 aa).

The first 21 residues, 1–21 (MKAYFIAILTLFTCIATVVRA), serve as a signal peptide directing secretion. The active-site Acyl-ester intermediate is Ser-66. 235–237 (KTG) provides a ligand contact to substrate.

Belongs to the class-A beta-lactamase family.

It carries out the reaction a beta-lactam + H2O = a substituted beta-amino acid. In Bacteroides uniformis, this protein is Beta-lactamase (cblA).